We begin with the raw amino-acid sequence, 297 residues long: Bifunctional protein FolD (297 aa).

NADP(+)-binding positions include 166-168, Ser-191, and Ile-232; that span reads GRS.

This sequence belongs to the tetrahydrofolate dehydrogenase/cyclohydrolase family. As to quaternary structure, homodimer.

The catalysed reaction is (6R)-5,10-methylene-5,6,7,8-tetrahydrofolate + NADP(+) = (6R)-5,10-methenyltetrahydrofolate + NADPH. It carries out the reaction (6R)-5,10-methenyltetrahydrofolate + H2O = (6R)-10-formyltetrahydrofolate + H(+). It participates in one-carbon metabolism; tetrahydrofolate interconversion. Its function is as follows. Catalyzes the oxidation of 5,10-methylenetetrahydrofolate to 5,10-methenyltetrahydrofolate and then the hydrolysis of 5,10-methenyltetrahydrofolate to 10-formyltetrahydrofolate. The polypeptide is Bifunctional protein FolD (Phenylobacterium zucineum (strain HLK1)).